A 468-amino-acid polypeptide reads, in one-letter code: mRNA cleavage and polyadenylation factor CLP1 (468 aa).

The tract at residues 1 to 22 is disordered; that stretch reads MLSLPGLNLAPQPAEPLNAPTS. ATP-binding positions include Glu35, Lys74, and 138–143; that span reads HSGKTS.

Belongs to the Clp1 family. Clp1 subfamily. As to quaternary structure, component of a pre-mRNA cleavage factor complex. Interacts directly with PCF11.

The protein localises to the nucleus. In terms of biological role, required for endonucleolytic cleavage during polyadenylation-dependent pre-mRNA 3'-end formation. The protein is mRNA cleavage and polyadenylation factor CLP1 of Phaeosphaeria nodorum (strain SN15 / ATCC MYA-4574 / FGSC 10173) (Glume blotch fungus).